The chain runs to 303 residues: Lipase chaperone (303 aa).

Residues 7–23 form a helical membrane-spanning segment; the sequence is TLAAACAAWLAWWAWPD.

It belongs to the lipase chaperone family.

The protein resides in the cell inner membrane. Functionally, may be involved in the folding of the extracellular lipase during its passage through the periplasm. This Chromobacterium violaceum (strain ATCC 12472 / DSM 30191 / JCM 1249 / CCUG 213 / NBRC 12614 / NCIMB 9131 / NCTC 9757 / MK) protein is Lipase chaperone (lifO).